The sequence spans 609 residues: Glutamine--fructose-6-phosphate aminotransferase [isomerizing] (609 aa).

Cysteine 2 acts as the Nucleophile; for GATase activity in catalysis. One can recognise a Glutamine amidotransferase type-2 domain in the interval 2-218; the sequence is CGIVGAIAQR…EGDIAEITRR (217 aa). SIS domains lie at 286-426 and 458-599; these read ADEL…LKGL and LAED…VDQP. The active-site For Fru-6P isomerization activity is lysine 604.

Homodimer.

It is found in the cytoplasm. The catalysed reaction is D-fructose 6-phosphate + L-glutamine = D-glucosamine 6-phosphate + L-glutamate. Functionally, catalyzes the first step in hexosamine metabolism, converting fructose-6P into glucosamine-6P using glutamine as a nitrogen source. This Shigella flexneri protein is Glutamine--fructose-6-phosphate aminotransferase [isomerizing].